A 220-amino-acid chain; its full sequence is Artemin (220 aa).

An N-terminal signal peptide occupies residues 1-39 (MELGLGGLSTLSHCPWPRQQPALWPTLAALALLSSVAEA). Positions 40-107 (SLGSAPRSPA…ALPRGGRAAR (68 aa)) are excised as a propeptide. The tract at residues 41 to 121 (LGSAPRSPAP…GSRARAAGAR (81 aa)) is disordered. Pro residues-rich tracts occupy residues 47-58 (SPAPREGPPPVL) and 81-98 (PPPQ…PPSA). Positions 99–121 (LPRGGRAARAGGPGSRARAAGAR) are enriched in low complexity. Intrachain disulfides connect cysteine 123–cysteine 188, cysteine 150–cysteine 216, and cysteine 154–cysteine 218. N-linked (GlcNAc...) asparagine glycosylation occurs at asparagine 202.

The protein belongs to the TGF-beta family. GDNF subfamily. As to quaternary structure, homodimer; disulfide-linked. Interacts with GFRA3 coreceptor and RET: forms a 2:2:2 ternary complex composed of ARTN ligand, GFRA3 and RET receptor. As to expression, ubiquitous. Expressed at high levels in peripheral tissues including prostate, placenta, pancreas, heart, kidney, pituitary gland, lung and testis. Expressed at low levels in the brain.

Its subcellular location is the secreted. Its function is as follows. Growth factor that supports the survival of sensory and sympathetic peripheral neurons in culture and also supports the survival of dopaminergic neurons of the ventral mid-brain. Acts by binding to its coreceptor, GFRA3, leading to autophosphorylation and activation of the RET receptor. Strong attractant of gut hematopoietic cells thus promoting the formation Peyer's patch-like structures, a major component of the gut-associated lymphoid tissue. This Homo sapiens (Human) protein is Artemin.